Consider the following 440-residue polypeptide: Ribosomal protein uS12 methylthiotransferase RimO (440 aa).

The region spanning 5 to 116 (PTIAISHLGC…IVNVIERAEQ (112 aa)) is the MTTase N-terminal domain. The [4Fe-4S] cluster site is built by cysteine 14, cysteine 50, cysteine 79, cysteine 154, cysteine 158, and cysteine 161. The 231-residue stretch at 140–370 (TTTEGVAYLR…ALQQPISWRK (231 aa)) folds into the Radical SAM core domain. The TRAM domain maps to 372-438 (QQEVGKTVEV…EYDLFGQVVS (67 aa)).

This sequence belongs to the methylthiotransferase family. RimO subfamily. The cofactor is [4Fe-4S] cluster.

It localises to the cytoplasm. The catalysed reaction is L-aspartate(89)-[ribosomal protein uS12]-hydrogen + (sulfur carrier)-SH + AH2 + 2 S-adenosyl-L-methionine = 3-methylsulfanyl-L-aspartate(89)-[ribosomal protein uS12]-hydrogen + (sulfur carrier)-H + 5'-deoxyadenosine + L-methionine + A + S-adenosyl-L-homocysteine + 2 H(+). In terms of biological role, catalyzes the methylthiolation of an aspartic acid residue of ribosomal protein uS12. This chain is Ribosomal protein uS12 methylthiotransferase RimO, found in Trichormus variabilis (strain ATCC 29413 / PCC 7937) (Anabaena variabilis).